A 366-amino-acid chain; its full sequence is Sulfate/thiosulfate import ATP-binding protein CysA 2 (366 aa).

Positions 14-243 constitute an ABC transporter domain; it reads LSVHALCRRF…PASRFVAEFV (230 aa). 46–53 is a binding site for ATP; sequence GPSGCGKT.

This sequence belongs to the ABC transporter superfamily. Sulfate/tungstate importer (TC 3.A.1.6) family. As to quaternary structure, the complex is composed of two ATP-binding proteins (CysA), two transmembrane proteins (CysT and CysW) and a solute-binding protein (CysP).

It localises to the cell inner membrane. It catalyses the reaction sulfate(out) + ATP + H2O = sulfate(in) + ADP + phosphate + H(+). It carries out the reaction thiosulfate(out) + ATP + H2O = thiosulfate(in) + ADP + phosphate + H(+). Part of the ABC transporter complex CysAWTP involved in sulfate/thiosulfate import. Responsible for energy coupling to the transport system. The chain is Sulfate/thiosulfate import ATP-binding protein CysA 2 from Chromobacterium violaceum (strain ATCC 12472 / DSM 30191 / JCM 1249 / CCUG 213 / NBRC 12614 / NCIMB 9131 / NCTC 9757 / MK).